The sequence spans 350 residues: Biotin synthase (350 aa).

Residues 41-268 (NEVQISRLLS…LSRVRLSAGR (228 aa)) form the Radical SAM core domain. [4Fe-4S] cluster-binding residues include Cys-56, Cys-60, and Cys-63. [2Fe-2S] cluster is bound by residues Cys-100, Cys-131, Cys-191, and Arg-263.

The protein belongs to the radical SAM superfamily. Biotin synthase family. In terms of assembly, homodimer. [4Fe-4S] cluster is required as a cofactor. The cofactor is [2Fe-2S] cluster.

It carries out the reaction (4R,5S)-dethiobiotin + (sulfur carrier)-SH + 2 reduced [2Fe-2S]-[ferredoxin] + 2 S-adenosyl-L-methionine = (sulfur carrier)-H + biotin + 2 5'-deoxyadenosine + 2 L-methionine + 2 oxidized [2Fe-2S]-[ferredoxin]. It participates in cofactor biosynthesis; biotin biosynthesis; biotin from 7,8-diaminononanoate: step 2/2. Its function is as follows. Catalyzes the conversion of dethiobiotin (DTB) to biotin by the insertion of a sulfur atom into dethiobiotin via a radical-based mechanism. The polypeptide is Biotin synthase (Shewanella baltica (strain OS223)).